Consider the following 481-residue polypeptide: Bindin (481 aa).

Positions 1–20 are cleaved as a signal peptide; sequence MGFHQILVTVVALALASVRA. The propeptide occupies 21-245; that stretch reads EFPSRTDSPT…DSKRGARKKR (225 aa). 2 stretches are compositionally biased toward basic and acidic residues: residues 154 to 163 and 178 to 189; these read DGDLRKRRES and RKGDEPAGHTLK. Disordered stretches follow at residues 154-193 and 219-243; these read DGDL…DLAP and GHSP…GARK. The interval 352 to 360 is fucose-binding domain; sequence LRHLRHHSN. A disordered region spans residues 376–481; sequence SAMQEEEEEE…QPYGQGYLQG (106 aa). Residues 379–389 are compositionally biased toward acidic residues; that stretch reads QEEEEEEEEDA. Gly residues predominate over residues 406-416; sequence AGFGGGGGGGA. Low complexity-rich tracts occupy residues 417–440 and 464–481; these read MMSP…MGFP and GMGM…YLQG.

This sequence belongs to the bindin family.

The protein localises to the cytoplasmic vesicle. It localises to the secretory vesicle. It is found in the acrosome lumen. Species-specific sea urchin sperm protein required for adhesion of sperm to the egg surface during fertilization. Bindin coats the acrosomal process after it is externalized by the acrosome reaction. It binds to sulfated, fucose-containing polysaccharides on the vitelline layer receptor proteoglycans which cover the egg plasma membrane. The polypeptide is Bindin (Strongylocentrotus purpuratus (Purple sea urchin)).